The chain runs to 122 residues: Cytochrome c-556 (122 aa).

4 residues coordinate heme: Met11, Cys111, Cys114, and His115. The heme c site is built by Met11, Cys111, Cys114, and His115.

In terms of assembly, monomer. Post-translationally, binds 1 heme c group covalently per subunit.

Its function is as follows. Low-spin monoheme cytochrome c. The sequence is that of Cytochrome c-556 from Agrobacterium tumefaciens (strain II Chrys).